The primary structure comprises 402 residues: S-adenosylmethionine synthase (402 aa).

Position 17 (His17) interacts with ATP. Asp19 serves as a coordination point for Mg(2+). Glu45 is a K(+) binding site. 2 residues coordinate L-methionine: Glu58 and Gln101. Residues 101–111 (QSSDIADGVNE) form a flexible loop region. Residues 177–179 (DAK), 244–245 (RF), Asp253, 259–260 (RK), Ala276, and Lys280 contribute to the ATP site. Residue Asp253 coordinates L-methionine. Residue Lys284 coordinates L-methionine.

Belongs to the AdoMet synthase family. In terms of assembly, homotetramer; dimer of dimers. Mg(2+) is required as a cofactor. K(+) serves as cofactor.

It is found in the cytoplasm. The catalysed reaction is L-methionine + ATP + H2O = S-adenosyl-L-methionine + phosphate + diphosphate. The protein operates within amino-acid biosynthesis; S-adenosyl-L-methionine biosynthesis; S-adenosyl-L-methionine from L-methionine: step 1/1. Catalyzes the formation of S-adenosylmethionine (AdoMet) from methionine and ATP. The overall synthetic reaction is composed of two sequential steps, AdoMet formation and the subsequent tripolyphosphate hydrolysis which occurs prior to release of AdoMet from the enzyme. This Lactobacillus johnsonii (strain CNCM I-12250 / La1 / NCC 533) protein is S-adenosylmethionine synthase.